Reading from the N-terminus, the 151-residue chain is Neuroglobin (151 aa).

A Globin domain is found at 1-149 (MERPEPELIR…VVQAMSRGWD (149 aa)). Positions 64 and 96 each coordinate heme b.

It belongs to the globin family. As to quaternary structure, monomer. Homodimer and homotetramer; disulfide-linked. Mainly monomeric but also detected as part of homodimers and homotetramers. Interacts with 14-3-3 proteins; regulates the phosphorylation of NGB. Could interact (ferrous form) with G-alpha(i) proteins (GTP-bound form). Post-translationally, phosphorylated during hypoxia by ERK1/ERK2. Phosphorylation regulates the heme pocket hexacoordination preventing the association of His-64 with the heme metal center. Thereby, promotes the access of dioxygen and nitrite to the heme and stimulates the nitrite reductase activity. Phosphorylation during hypoxia is stabilized by 14-3-3 proteins.

The protein localises to the cytoplasm. It localises to the cytosol. The protein resides in the mitochondrion matrix. The catalysed reaction is Fe(III)-heme b-[protein] + nitric oxide + H2O = Fe(II)-heme b-[protein] + nitrite + 2 H(+). Monomeric globin with a bis-histidyl six-coordinate heme-iron atom through which it can bind dioxygen, carbon monoxide and nitric oxide. Could help transport oxygen and increase its availability to the metabolically active neuronal tissues, though its low quantity in tissues as well as its high affinity for dioxygen, which may limit its oxygen-releasing ability, argue against it. The ferrous/deoxygenated form exhibits a nitrite reductase activity and it could produce nitric oxide which in turn inhibits cellular respiration in response to hypoxia. In its ferrous/deoxygenated state, it may also exhibit GDI (Guanine nucleotide Dissociation Inhibitor) activity toward heterotrimeric G-alpha proteins, thereby regulating signal transduction to facilitate neuroprotective responses in the wake of hypoxia and associated oxidative stress. The protein is Neuroglobin of Canis lupus familiaris (Dog).